Reading from the N-terminus, the 149-residue chain is Deoxyuridine 5'-triphosphate nucleotidohydrolase (149 aa).

Substrate contacts are provided by residues 68-70 (RSG), Asn-81, 85-87 (LID), and Met-95.

The protein belongs to the dUTPase family. Mg(2+) serves as cofactor.

The catalysed reaction is dUTP + H2O = dUMP + diphosphate + H(+). It participates in pyrimidine metabolism; dUMP biosynthesis; dUMP from dCTP (dUTP route): step 2/2. Its function is as follows. This enzyme is involved in nucleotide metabolism: it produces dUMP, the immediate precursor of thymidine nucleotides and it decreases the intracellular concentration of dUTP so that uracil cannot be incorporated into DNA. This chain is Deoxyuridine 5'-triphosphate nucleotidohydrolase, found in Methylibium petroleiphilum (strain ATCC BAA-1232 / LMG 22953 / PM1).